A 416-amino-acid chain; its full sequence is Carboxypeptidase B (416 aa).

The N-terminal stretch at 1 to 15 (MAFLILVTLALASAH) is a signal peptide. Positions 16–109 (YSGEHFEGEK…LEGQFGRQVP (94 aa)) are cleaved as a propeptide — activation peptide. Positions 117–411 (KYNRWETIEA…LAIKHLARYV (295 aa)) constitute a Peptidase M14 domain. Residues histidine 175 and glutamate 178 each coordinate Zn(2+). Residues 175–178 (HARE), arginine 233, and 250–251 (TR) each bind substrate. Intrachain disulfides connect cysteine 244/cysteine 267 and cysteine 258/cysteine 272. Histidine 303 provides a ligand contact to Zn(2+). Substrate contacts are provided by residues 304–305 (SY) and tyrosine 355. The active-site Proton donor/acceptor is glutamate 377.

Belongs to the peptidase M14 family. Zn(2+) is required as a cofactor.

It is found in the secreted. The protein resides in the zymogen granule lumen. The catalysed reaction is Preferential release of a C-terminal lysine or arginine amino acid.. This chain is Carboxypeptidase B (CPB1), found in Canis lupus familiaris (Dog).